Consider the following 978-residue polypeptide: Monofunctional C1-tetrahydrofolate synthase, mitochondrial (978 aa).

Residues 1–10 (MGTRLPLVLR) show a composition bias toward low complexity. A mitochondrion-targeting transit peptide spans 1–31 (MGTRLPLVLRQLRRPPQPPGPPRRLRVPCRA). The segment at 1-71 (MGTRLPLVLR…SPGGRTPAAR (71 aa)) is disordered. Residues 31–348 (ASSGGGGGGG…REQQHRRWRL (318 aa)) are methylenetetrahydrofolate dehydrogenase and cyclohydrolase. Over residues 33 to 45 (SGGGGGGGGGREG) the composition is skewed to gly residues. Position 189 is an N6-acetyllysine; alternate (Lys189). Lys189 carries the N6-succinyllysine; alternate modification. A formyltetrahydrofolate synthetase region spans residues 349–978 (HCLKLQPLSP…TETEQVKGLF (630 aa)). A Phosphoserine modification is found at Ser357. Residue 423–430 (TPLGEGKS) coordinates ATP. The residue at position 596 (Lys596) is an N6-succinyllysine.

This sequence in the N-terminal section; belongs to the tetrahydrofolate dehydrogenase/cyclohydrolase family. The protein in the C-terminal section; belongs to the formate--tetrahydrofolate ligase family. In terms of assembly, homodimer. As to expression, detected in most tissues, highest expression found in placenta, thymus and brain. Low expression is found in liver and skeletal muscle. Up-regulated in colon adenocarcinoma.

The protein localises to the mitochondrion. It catalyses the reaction (6S)-5,6,7,8-tetrahydrofolate + formate + ATP = (6R)-10-formyltetrahydrofolate + ADP + phosphate. The protein operates within one-carbon metabolism; tetrahydrofolate interconversion. Functionally, may provide the missing metabolic reaction required to link the mitochondria and the cytoplasm in the mammalian model of one-carbon folate metabolism complementing thus the enzymatic activities of MTHFD2. The polypeptide is Monofunctional C1-tetrahydrofolate synthase, mitochondrial (Homo sapiens (Human)).